Reading from the N-terminus, the 278-residue chain is HTH-type transcriptional activator RhaS (278 aa).

The region spanning 174–272 is the HTH araC/xylS-type domain; it reads NHLIAWLEDH…GWSPREIRQG (99 aa). DNA-binding regions (H-T-H motif) lie at residues 191 to 212 and 239 to 262; these read EAIA…KQHT and VTHI…RREF.

Binds DNA as a dimer.

It localises to the cytoplasm. In terms of biological role, activates expression of the rhaBAD and rhaT operons. The sequence is that of HTH-type transcriptional activator RhaS from Escherichia fergusonii (strain ATCC 35469 / DSM 13698 / CCUG 18766 / IAM 14443 / JCM 21226 / LMG 7866 / NBRC 102419 / NCTC 12128 / CDC 0568-73).